Consider the following 248-residue polypeptide: Murein peptide amidase A (248 aa).

A Peptidase M14 domain is found at 3 to 245 (RYYSNNQEIT…DAFIALLQHD (243 aa)). Positions 60, 63, and 168 each coordinate Zn(2+). Residue Glu-221 is the Proton donor/acceptor of the active site.

It belongs to the peptidase M14 family. In terms of assembly, homodimer. Zn(2+) serves as cofactor.

The protein resides in the cytoplasm. It carries out the reaction L-alanyl-gamma-D-glutamyl-meso-2,6-diaminopimelate + H2O = L-alanyl-D-glutamate + meso-2,6-diaminopimelate. It participates in cell wall degradation; peptidoglycan degradation. Involved in muropeptide degradation. Catalyzes the hydrolysis of the gamma-D-glutamyl-diaminopimelic acid (gamma-D-Glu-Dap) amide bond in the murein tripeptide L-alanyl-gamma-D-glutamyl-meso-diaminopimelic acid, leading to the formation of L-Ala-gamma-D-Glu and Dap. Has weak activity with L-Ala-gamma-D-Glu-L-Lys, MurNAc-tripeptide and gamma-D-Glu-meso-Dap. Cannot hydrolyze murein tetrapeptide. This chain is Murein peptide amidase A, found in Vibrio campbellii (strain ATCC BAA-1116).